The primary structure comprises 135 residues: uncharacterized protein (135 aa).

This is an uncharacterized protein from Commelina yellow mottle virus (CoYMV).